The primary structure comprises 277 residues: Large ribosomal subunit protein uL2 (277 aa).

Positions 222–277 (GVAMNPVDHPHGGGEGRTSGGRHPVSPWGKSTKGKRTRSNKATDKFIMHTRHQRKK) are disordered.

Belongs to the universal ribosomal protein uL2 family. As to quaternary structure, part of the 50S ribosomal subunit. Forms a bridge to the 30S subunit in the 70S ribosome.

One of the primary rRNA binding proteins. Required for association of the 30S and 50S subunits to form the 70S ribosome, for tRNA binding and peptide bond formation. It has been suggested to have peptidyltransferase activity; this is somewhat controversial. Makes several contacts with the 16S rRNA in the 70S ribosome. This chain is Large ribosomal subunit protein uL2, found in Bartonella quintana (strain Toulouse) (Rochalimaea quintana).